Here is a 336-residue protein sequence, read N- to C-terminus: DNA-directed RNA polymerase subunit alpha (336 aa).

The segment at 1–226 is alpha N-terminal domain (alpha-NTD); sequence MLIAQRPTLS…ELFGLARELN (226 aa). The alpha C-terminal domain (alpha-CTD) stretch occupies residues 243-336; that stretch reads LAADMALPIE…SDDAFGDDEL (94 aa).

It belongs to the RNA polymerase alpha chain family. In terms of assembly, homodimer. The RNAP catalytic core consists of 2 alpha, 1 beta, 1 beta' and 1 omega subunit. When a sigma factor is associated with the core the holoenzyme is formed, which can initiate transcription.

The catalysed reaction is RNA(n) + a ribonucleoside 5'-triphosphate = RNA(n+1) + diphosphate. In terms of biological role, DNA-dependent RNA polymerase catalyzes the transcription of DNA into RNA using the four ribonucleoside triphosphates as substrates. This Renibacterium salmoninarum (strain ATCC 33209 / DSM 20767 / JCM 11484 / NBRC 15589 / NCIMB 2235) protein is DNA-directed RNA polymerase subunit alpha.